Reading from the N-terminus, the 369-residue chain is 2-aminoethylphosphonate--pyruvate transaminase (369 aa).

Lys-193 carries the post-translational modification N6-(pyridoxal phosphate)lysine.

The protein belongs to the class-V pyridoxal-phosphate-dependent aminotransferase family. PhnW subfamily. In terms of assembly, homodimer. Pyridoxal 5'-phosphate serves as cofactor.

It catalyses the reaction (2-aminoethyl)phosphonate + pyruvate = phosphonoacetaldehyde + L-alanine. Involved in phosphonate degradation. This Pseudomonas fluorescens (strain ATCC BAA-477 / NRRL B-23932 / Pf-5) protein is 2-aminoethylphosphonate--pyruvate transaminase.